Reading from the N-terminus, the 107-residue chain is U1-lycotoxin-Ls1i (107 aa).

The signal sequence occupies residues 1–20; that stretch reads MMKVLVVVALLVTLISYSSS. Residues 21–41 constitute a propeptide that is removed on maturation; that stretch reads EGIDDLEADELLSLMANEQTR. 4 cysteine pairs are disulfide-bonded: C44–C59, C51–C68, C58–C86, and C70–C84.

This sequence belongs to the neurotoxin 19 (CSTX) family. 04 (U1-Lctx) subfamily. As to expression, expressed by the venom gland.

It localises to the secreted. In Lycosa singoriensis (Wolf spider), this protein is U1-lycotoxin-Ls1i.